A 575-amino-acid polypeptide reads, in one-letter code: Transcription factor collier (575 aa).

An interaction with DNA region spans residues 79-82 (RKSN). The C5-type zinc finger occupies 167–186 (CRVLLTHEVMCSRCCDKKSC). 2 interaction with DNA regions span residues 213-220 (NCLKNAGN) and 252-255 (NNSK). The tract at residues 255–278 (KHGRRAKRLDTTEGTGNTSLSISG) is disordered. Polar residues predominate over residues 266-276 (TEGTGNTSLSI). Positions 299–382 (PCIKAISPSE…KGSPGRFVYV (84 aa)) constitute an IPT/TIG domain. 2 disordered regions span residues 456–492 (GQWT…GSYG) and 546–575 (AATA…AAAV). Residues 479–492 (SSASTPHSSGGSYG) are compositionally biased toward low complexity. Residues 546-557 (AATAHPHHHYPH) show a composition bias toward basic residues. The segment covering 561–575 (PWHNPAVSAATAAAV) has biased composition (low complexity).

It belongs to the COE family. Its expression at the blastoderm stage is restricted to a single stripe of cells corresponding to part of the intercalary and mandibular segment primordia, possibly parasegment O.

Its subcellular location is the nucleus. Functionally, may act as a 'second-level regulator' of head patterning. Required for establishment of the PS(-1)/PS0 parasegmental border and formation of the intercalary segment. Required for expression of the segment polarity genes hedgehog, engrailed and wingless, and the segment-identity genes CAP and collar in the intercalary segment. Required at the onset of the gastrulation for the correct formation of the mandibular segment. This is Transcription factor collier (kn) from Drosophila melanogaster (Fruit fly).